The primary structure comprises 364 residues: UDP-N-acetylglucosamine--N-acetylmuramyl-(pentapeptide) pyrophosphoryl-undecaprenol N-acetylglucosamine transferase (364 aa).

UDP-N-acetyl-alpha-D-glucosamine contacts are provided by residues 10–12 (TGG), Asn124, Arg166, Ser196, Ile252, and Gln297.

It belongs to the glycosyltransferase 28 family. MurG subfamily.

Its subcellular location is the cell membrane. The enzyme catalyses di-trans,octa-cis-undecaprenyl diphospho-N-acetyl-alpha-D-muramoyl-L-alanyl-D-glutamyl-meso-2,6-diaminopimeloyl-D-alanyl-D-alanine + UDP-N-acetyl-alpha-D-glucosamine = di-trans,octa-cis-undecaprenyl diphospho-[N-acetyl-alpha-D-glucosaminyl-(1-&gt;4)]-N-acetyl-alpha-D-muramoyl-L-alanyl-D-glutamyl-meso-2,6-diaminopimeloyl-D-alanyl-D-alanine + UDP + H(+). It functions in the pathway cell wall biogenesis; peptidoglycan biosynthesis. Functionally, cell wall formation. Catalyzes the transfer of a GlcNAc subunit on undecaprenyl-pyrophosphoryl-MurNAc-pentapeptide (lipid intermediate I) to form undecaprenyl-pyrophosphoryl-MurNAc-(pentapeptide)GlcNAc (lipid intermediate II). The polypeptide is UDP-N-acetylglucosamine--N-acetylmuramyl-(pentapeptide) pyrophosphoryl-undecaprenol N-acetylglucosamine transferase (Ruminiclostridium cellulolyticum (strain ATCC 35319 / DSM 5812 / JCM 6584 / H10) (Clostridium cellulolyticum)).